The sequence spans 125 residues: Large ribosomal subunit protein bL12 (125 aa).

Belongs to the bacterial ribosomal protein bL12 family. As to quaternary structure, homodimer. Part of the ribosomal stalk of the 50S ribosomal subunit. Forms a multimeric L10(L12)X complex, where L10 forms an elongated spine to which 2 to 4 L12 dimers bind in a sequential fashion. Binds GTP-bound translation factors.

In terms of biological role, forms part of the ribosomal stalk which helps the ribosome interact with GTP-bound translation factors. Is thus essential for accurate translation. The protein is Large ribosomal subunit protein bL12 of Sinorhizobium medicae (strain WSM419) (Ensifer medicae).